Reading from the N-terminus, the 236-residue chain is Class B acid phosphatase (236 aa).

An N-terminal signal peptide occupies residues 1–22; that stretch reads MNHTLRSITLVLACVASLSANA. Catalysis depends on Asp-70, which acts as the Nucleophile. Residues Asp-70 and Asp-72 each contribute to the Mg(2+) site. The Proton donor role is filled by Asp-72. Substrate is bound by residues 138–139 and Lys-176; that span reads TG. Asp-191 is a binding site for Mg(2+).

The protein belongs to the class B bacterial acid phosphatase family. As to quaternary structure, homotetramer. The cofactor is Mg(2+).

The protein localises to the periplasm. It catalyses the reaction a phosphate monoester + H2O = an alcohol + phosphate. Functionally, dephosphorylates several organic phosphate monoesters. Also has a phosphotransferase activity catalyzing the transfer of low-energy phosphate groups from organic phosphate monoesters to free hydroxyl groups of various organic compounds. The sequence is that of Class B acid phosphatase from Marinomonas sp. (strain MWYL1).